The following is a 233-amino-acid chain: MRKPDGKIVLLGDMNVGKTSLLQRYMERRFPDTVSTVGGAFYLKQWRSFNISIWDTAGREQFHGLGSLYCRGAAAIILTYDVNHPQSLFELEDRFLGLTETANNDCLFAIVGNKVDLTSERDTEGGEKEGPASGKVGSCVSTKVPKQVQPEDAVALYKKILKYKMLDEREMPAAEQMCFETSAKTGYNVDLLFETLFDLVVPMIMRQRAEESDQTVDIASCKTPKQTRSGCCA.

Residues Gly17, Lys18, Thr19, Asp32, and Thr36 each contribute to the GTP site. Residue Thr19 coordinates Mg(2+). 2 short sequence motifs (switch) span residues 28 to 41 (RRFP…GGAF) and 55 to 72 (DTAG…YCRG). Mg(2+)-binding residues include Thr36 and Asp55. Residues Gly58, Asn113, Lys114, and Asp116 each coordinate GTP. Basic and acidic residues predominate over residues 119 to 130 (SERDTEGGEKEG). The tract at residues 119–138 (SERDTEGGEKEGPASGKVGS) is disordered. Residues Ala183 and Lys184 each contribute to the GTP site. Residues Cys231 and Cys232 are each lipidated (S-geranylgeranyl cysteine).

Belongs to the small GTPase superfamily. Rab family. The cofactor is Mg(2+). In terms of tissue distribution, present in a variety of tissues, but not in brain.

It is found in the cytoplasmic vesicle. The protein localises to the phagosome. It localises to the phagosome membrane. The protein resides in the golgi apparatus. It catalyses the reaction GTP + H2O = GDP + phosphate + H(+). Regulated by guanine nucleotide exchange factors (GEFs) which promote the exchange of bound GDP for free GTP. Regulated by GTPase activating proteins (GAPs) which increase the GTP hydrolysis activity. Inhibited by GDP dissociation inhibitors (GDIs). Its function is as follows. Plays a role in apical endocytosis/recycling. Plays a role in the maturation and acidification of phagosomes that engulf pathogens, such as S.aureus and Mycobacterium. Plays a role in the fusion of phagosomes with lysosomes. This Mus musculus (Mouse) protein is Ras-related protein Rab-20.